Here is a 511-residue protein sequence, read N- to C-terminus: Exodeoxyribonuclease 7 large subunit (511 aa).

This sequence belongs to the XseA family. As to quaternary structure, heterooligomer composed of large and small subunits.

The protein resides in the cytoplasm. The catalysed reaction is Exonucleolytic cleavage in either 5'- to 3'- or 3'- to 5'-direction to yield nucleoside 5'-phosphates.. Bidirectionally degrades single-stranded DNA into large acid-insoluble oligonucleotides, which are then degraded further into small acid-soluble oligonucleotides. The sequence is that of Exodeoxyribonuclease 7 large subunit from Brucella abortus (strain S19).